Consider the following 286-residue polypeptide: NAD(P)H azoreductase (286 aa).

Residues 6–11 (GGTGTI), arginine 31, and 136–141 (GFFMQN) each bind NADP(+).

Belongs to the NmrA-type oxidoreductase family. Azoreductase type 3 subfamily. As to quaternary structure, monomer.

Functionally, catalyzes the reductive cleavage of azo bond in aromatic azo compounds to the corresponding amines. Uses preferentially NADPH rather than NADH as an electron donor for its activity. The enzyme reductively cleaved Orange II and carboxy-Orange II, and can also reduce several sulfonated structural analogs, which carry a hydroxy group in the 2 position of the naphthol ring. This is NAD(P)H azoreductase (azoB) from Xenophilus azovorans.